The chain runs to 522 residues: Man(5)GlcNAc(2)-PP-dolichol translocation protein RFT1 (522 aa).

10 helical membrane passes run 35–55, 75–95, 108–128, 143–165, 177–197, 322–342, 354–374, 400–420, 457–477, and 479–499; these read DVLG…LFLT, LLWL…YLWY, VLLS…FSVI, FAIG…LFMF, AQYI…YIYI, VVGV…PVVI, GGAL…INGI, IIHL…GFIV, TSIF…LFAT, and PGLS…ILTA.

This sequence belongs to the RFT1 family.

It is found in the endoplasmic reticulum membrane. It participates in protein modification; protein glycosylation. Its function is as follows. Intramembrane glycolipid transporter that operates in the biosynthetic pathway of dolichol-linked oligosaccharides, the glycan precursors employed in protein asparagine (N)-glycosylation. The sequential addition of sugars to dolichol pyrophosphate produces dolichol-linked oligosaccharides containing fourteen sugars, including two GlcNAcs, nine mannoses and three glucoses. Once assembled, the oligosaccharide is transferred from the lipid to nascent proteins by oligosaccharyltransferases. The assembly of dolichol-linked oligosaccharides begins on the cytosolic side of the endoplasmic reticulum membrane and finishes in its lumen. RFT1 could mediate the translocation of the cytosolically oriented intermediate DolPP-GlcNAc2Man5, produced by ALG11, into the ER lumen where dolichol-linked oligosaccharides assembly continues. However, the intramembrane lipid transporter activity could not be confirmed in vitro. The chain is Man(5)GlcNAc(2)-PP-dolichol translocation protein RFT1 from Caenorhabditis elegans.